The sequence spans 85 residues: Large ribosomal subunit protein bL27 (85 aa).

Belongs to the bacterial ribosomal protein bL27 family.

The polypeptide is Large ribosomal subunit protein bL27 (Campylobacter concisus (strain 13826)).